The primary structure comprises 311 residues: Cadmium, cobalt and zinc/H(+)-K(+) antiporter (311 aa).

At 1 to 12 (MGHNHNEGANKK) the chain is on the extracellular side. A helical membrane pass occupies residues 13–33 (VLLISFIMITGYMIIEAIGGF). Residues 34–43 (LTNSLALLSD) are Cytoplasmic-facing. Residues 44-64 (AGHMLSDSISLMVALIAFTLA) traverse the membrane as a helical segment. Residues 65 to 78 (EKKANHNKTFGYKR) are Extracellular-facing. Residues 79 to 99 (FEILAAVINGAALILISLYII) form a helical membrane-spanning segment. Residues 100-115 (YEAIERFSNPPKVATT) lie on the Cytoplasmic side of the membrane. A helical membrane pass occupies residues 116 to 136 (GMLTISIIGLVVNLLVAWIMM). Over 137-157 (SGGDTKNNLNIRGAYLHVISD) the chain is Extracellular. A helical transmembrane segment spans residues 158–178 (MLGSVGAILAAILIIFFGWGW). Topologically, residues 179 to 311 (ADPLASIIVA…MEKQRDHHHH (133 aa)) are cytoplasmic.

This sequence belongs to the cation diffusion facilitator (CDF) transporter (TC 2.A.4) family. SLC30A subfamily.

It localises to the cell membrane. Functionally, involved in divalent cation and potassium homeostasis in the cell. Catalyzes the active efflux of zinc, cadmium and cobalt, in exchange for potassium and H(+) ions. The sequence is that of Cadmium, cobalt and zinc/H(+)-K(+) antiporter (czcD) from Bacillus subtilis (strain 168).